We begin with the raw amino-acid sequence, 168 residues long: Photosystem I assembly protein Ycf3 (168 aa).

TPR repeat units lie at residues 35 to 68 (AFTY…EIDP), 72 to 105 (SYIL…NPFL), and 120 to 153 (GEEA…TPGN).

The protein belongs to the Ycf3 family.

It localises to the plastid. The protein resides in the chloroplast thylakoid membrane. Functionally, essential for the assembly of the photosystem I (PSI) complex. May act as a chaperone-like factor to guide the assembly of the PSI subunits. The polypeptide is Photosystem I assembly protein Ycf3 (Nuphar advena (Common spatterdock)).